The following is a 438-amino-acid chain: MNLKKTENALSLTLKNFIKSESFGGIFLFLNAVLAMVVANSFLKESYFALWHTPFGFQIGDFFIGFSLHNWIDDVLMALFFLMIGLEIKRELLFGELSSFKKASFPVIAALGGMIAPGLIYFFLNADTPSQHGFGIPMATDIAFALGVIMLLGKRVPTALKVFLITLAVADDLGAIIVIALFYTTNLKFAWLLGALGVVLLLALLNRLNMRSLVPYLLLGVLLWFCVHQSGIHATIAAVVLAFMIPVKIPKDSKNVELLELGKRYAETSSGALLTKEQQEILHSIEEKASALQSPLERLEHFLAPISGYFIMPLFAFANAGVSVDSSINLEVDKVLFGVILGLCLGKPLGIFLITFISEKLKITARPKGISWWHILGAGLLAGIGFTMSMFISNLAFTSEHKDAMEVAKIAILLGSLISGIIGALYLFALDKRAALKK.

The next 11 membrane-spanning stretches (helical) occupy residues 23–43 (FGGI…NSFL), 62–82 (FFIG…LFFL), 104–124 (SFPV…YFFL), 133–153 (GFGI…MLLG), 162–182 (VFLI…IALF), 185–205 (TNLK…LALL), 221–241 (VLLW…AVVL), 302–322 (FLAP…NAGV), 337–357 (FGVI…ITFI), 372–392 (WWHI…SMFI), and 410–430 (IAIL…LFAL).

Belongs to the NhaA Na(+)/H(+) (TC 2.A.33) antiporter family.

It is found in the cell inner membrane. The enzyme catalyses Na(+)(in) + 2 H(+)(out) = Na(+)(out) + 2 H(+)(in). Functionally, na(+)/H(+) antiporter that extrudes sodium in exchange for external protons. The sequence is that of Na(+)/H(+) antiporter NhaA from Helicobacter pylori (strain P12).